The sequence spans 105 residues: Large ribosomal subunit protein eL36 (105 aa).

An N6-acetyllysine modification is found at Lys62.

Belongs to the eukaryotic ribosomal protein eL36 family. Component of the large ribosomal subunit.

Its subcellular location is the cytoplasm. It is found in the cytosol. Functionally, component of the large ribosomal subunit. The ribosome is a large ribonucleoprotein complex responsible for the synthesis of proteins in the cell. This is Large ribosomal subunit protein eL36 (RPL36) from Homo sapiens (Human).